Reading from the N-terminus, the 106-residue chain is MVNVPKTRKTYCKGKACRKHSQHKVTQYKAGKASLYAQGKRRYDRKQSGFGGQTKQIFHKKAKTTKKVVLRLECMSCKTKTQLALKRCKHFELGGEKKQKGQALQF.

This sequence belongs to the eukaryotic ribosomal protein eL42 family.

This chain is Large ribosomal subunit protein eL42 (RPL44), found in Kluyveromyces marxianus (Yeast).